A 444-amino-acid polypeptide reads, in one-letter code: Chromosome partition protein MukF (444 aa).

The segment at 212-240 (LDETSGNLRELQDTLNAAGDKLQAQLLRI) is leucine-zipper.

This sequence belongs to the MukF family. Interacts, and probably forms a ternary complex, with MukE and MukB via its C-terminal region. The complex formation is stimulated by calcium or magnesium. It is required for an interaction between MukE and MukB.

It is found in the cytoplasm. The protein resides in the nucleoid. Functionally, involved in chromosome condensation, segregation and cell cycle progression. May participate in facilitating chromosome segregation by condensation DNA from both sides of a centrally located replisome during cell division. Not required for mini-F plasmid partitioning. Probably acts via its interaction with MukB and MukE. Overexpression results in anucleate cells. It has a calcium binding activity. This chain is Chromosome partition protein MukF, found in Haemophilus influenzae (strain ATCC 51907 / DSM 11121 / KW20 / Rd).